A 625-amino-acid chain; its full sequence is ATP-dependent RNA helicase mrh4, mitochondrial (625 aa).

Residues 1–16 (MWKTARDSVCLICRSA) constitute a mitochondrion transit peptide. The span at 19-28 (TTTSTSARAS) shows a compositional bias: low complexity. The tract at residues 19 to 119 (TTTSTSARAS…DKNTKGQKAL (101 aa)) is disordered. Over residues 90-113 (DPRKAPKPKPVEEDSRRDKRDKNT) the composition is skewed to basic and acidic residues. The Q motif signature appears at 144–177 (QAFDQFDLLPVVKEAIAQEALKGMTEIKPTPVQR). Residues 195–406 (PKSDNGREEF…EEQFPYINRI (212 aa)) form the Helicase ATP-binding domain. 208–215 (AETGSGKT) provides a ligand contact to ATP. The DEAD box signature appears at 353–356 (DEAD). In terms of domain architecture, Helicase C-terminal spans 453 to 625 (EGPKSEIDVK…ESMFMGQALV (173 aa)).

This sequence belongs to the DEAD box helicase family. MRH4 subfamily.

It is found in the mitochondrion. The enzyme catalyses ATP + H2O = ADP + phosphate + H(+). Its function is as follows. ATP-binding RNA helicase involved in mitochondrial RNA metabolism. Required for maintenance of mitochondrial DNA. This chain is ATP-dependent RNA helicase mrh4, mitochondrial (drh-15), found in Neurospora crassa (strain ATCC 24698 / 74-OR23-1A / CBS 708.71 / DSM 1257 / FGSC 987).